A 332-amino-acid polypeptide reads, in one-letter code: tRNA N6-adenosine threonylcarbamoyltransferase (332 aa).

Fe cation is bound by residues His108 and His112. Residues 129–133 (LISGG), Asp161, Glu178, and Ser258 contribute to the substrate site. Asp286 provides a ligand contact to Fe cation.

The protein belongs to the KAE1 / TsaD family. Fe(2+) serves as cofactor.

The protein resides in the cytoplasm. It carries out the reaction L-threonylcarbamoyladenylate + adenosine(37) in tRNA = N(6)-L-threonylcarbamoyladenosine(37) in tRNA + AMP + H(+). In terms of biological role, required for the formation of a threonylcarbamoyl group on adenosine at position 37 (t(6)A37) in tRNAs that read codons beginning with adenine. Is probably involved in the transfer of the threonylcarbamoyl moiety of threonylcarbamoyl-AMP (TC-AMP) to the N6 group of A37. The chain is tRNA N6-adenosine threonylcarbamoyltransferase from Pyrobaculum arsenaticum (strain DSM 13514 / JCM 11321 / PZ6).